A 279-amino-acid chain; its full sequence is Aquaporin A (279 aa).

At 1–40 (MVKVVPLRFITYDPLKDPSKMIYRRPISKPVKAFKGFFSE) the chain is on the cytoplasmic side. A helical transmembrane segment spans residues 41–61 (FLGTLYLVYFCGGSVCAAFAV). Residues 62-69 (AGDSAARA) are Extracellular-facing. A helical transmembrane segment spans residues 70 to 90 (LLGGLIQGMALAALIWAVSGV). The Cytoplasmic portion of the chain corresponds to 91–114 (SGCNLNPAVTLANLLSGRVGLIDS). The NPA 1 motif lies at 96–98 (NPA). A helical membrane pass occupies residues 115 to 135 (LYYVAAQILGCIAGAGILYGC). Over 136 to 158 (LPNMYRIDLGVPHLAPGMNTGQA) the chain is Extracellular. Residues 159-179 (FLMEMMLTSILCLCVLGTSVF) form a helical membrane-spanning segment. Topologically, residues 180–188 (NVWDRRLNR) are cytoplasmic. A helical membrane pass occupies residues 189 to 209 (IAPFAIGLALFIGVAIGFNFS). The Extracellular portion of the chain corresponds to 210-227 (GGALNPVRVLGPSIISGV). An NPA 2 motif is present at residues 214 to 216 (NPV). The helical transmembrane segment at 228-248 (WSHHWVYWLGPIVGAILAAFI) threads the bilayer. Residues 249–279 (YRCLLQERFDVIERPGYIAPLIDPSTAVSSY) are Cytoplasmic-facing.

This sequence belongs to the MIP/aquaporin (TC 1.A.8) family.

It is found in the cell membrane. Its function is as follows. May form a water-specific channel. Required for prolonged spore survival on fruiting bodies. The chain is Aquaporin A (aqpA) from Dictyostelium discoideum (Social amoeba).